Consider the following 260-residue polypeptide: UPF0246 protein Bcep1808_2308 (260 aa).

This sequence belongs to the UPF0246 family.

This chain is UPF0246 protein Bcep1808_2308, found in Burkholderia vietnamiensis (strain G4 / LMG 22486) (Burkholderia cepacia (strain R1808)).